We begin with the raw amino-acid sequence, 60 residues long: UPF0337 protein SSP1134 (60 aa).

The disordered stretch occupies residues 1-41; it reads MADENKFEQAKGNVKETVGNVTDNKELENEGKEDKTSGKAK. Basic and acidic residues predominate over residues 23–41; sequence DNKELENEGKEDKTSGKAK.

It belongs to the UPF0337 (CsbD) family.

The protein is UPF0337 protein SSP1134 of Staphylococcus saprophyticus subsp. saprophyticus (strain ATCC 15305 / DSM 20229 / NCIMB 8711 / NCTC 7292 / S-41).